Consider the following 141-residue polypeptide: Large ribosomal subunit protein uL13 (141 aa).

It belongs to the universal ribosomal protein uL13 family. As to quaternary structure, part of the 50S ribosomal subunit.

Its function is as follows. This protein is one of the early assembly proteins of the 50S ribosomal subunit, although it is not seen to bind rRNA by itself. It is important during the early stages of 50S assembly. The protein is Large ribosomal subunit protein uL13 of Sulfurovum sp. (strain NBC37-1).